The chain runs to 409 residues: Putative integrase/recombinase y4rA (409 aa).

Residues 112–197 form the Core-binding (CB) domain; the sequence is SAVEQHVQAY…ALRSFLSYAR (86 aa). Residues 220 to 402 enclose the Tyr recombinase domain; sequence SIPRAIGRDD…DLDALRTLAL (183 aa). Residues arginine 260, lysine 284, histidine 354, arginine 357, and histidine 380 contribute to the active site. Residue tyrosine 389 is the O-(3'-phospho-DNA)-tyrosine intermediate of the active site.

The protein belongs to the 'phage' integrase family.

The chain is Putative integrase/recombinase y4rA from Sinorhizobium fredii (strain NBRC 101917 / NGR234).